The chain runs to 396 residues: 2-(3-amino-3-carboxypropyl)histidine synthase subunit 1 (396 aa).

Residues C89, C194, and C323 each contribute to the [4Fe-4S] cluster site. The segment at 372-396 is disordered; sequence TNNNEANRPKREKRKPHIVVRTEAS.

The protein belongs to the DPH1/DPH2 family. DPH1 subfamily. Component of the 2-(3-amino-3-carboxypropyl)histidine synthase complex composed of dph-1, dph-2, dph-3 and a NADH-dependent reductase. It depends on [4Fe-4S] cluster as a cofactor.

The enzyme catalyses L-histidyl-[translation elongation factor 2] + S-adenosyl-L-methionine = 2-[(3S)-amino-3-carboxypropyl]-L-histidyl-[translation elongation factor 2] + S-methyl-5'-thioadenosine + H(+). The protein operates within protein modification; peptidyl-diphthamide biosynthesis. Functionally, catalyzes the first step of diphthamide biosynthesis, a post-translational modification of histidine which occurs in elongation factor 2. Dph-1 and dph-2 transfer a 3-amino-3-carboxypropyl (ACP) group from S-adenosyl-L-methionine (SAM) to a histidine residue, the reaction is assisted by a reduction system comprising dph-3 and a NADH-dependent reductase. In Caenorhabditis elegans, this protein is 2-(3-amino-3-carboxypropyl)histidine synthase subunit 1 (dph-1).